Here is a 285-residue protein sequence, read N- to C-terminus: Homeobox protein Hox-A4 (285 aa).

2 disordered regions span residues 19–70 (PFEE…APRA) and 94–130 (ASPGRPEQSPAPGAHPSPAPQPPVPLGHCAPGPTTPA). Gly residues predominate over residues 27–41 (GGPGGGDGAVGGGPG). Low complexity predominate over residues 44–70 (RPQSAPHLPAPNPHAARQPPAYYAPRA). Residues 106 to 118 (GAHPSPAPQPPVP) show a composition bias toward pro residues. An Antp-type hexapeptide motif is present at residues 159 to 164 (VYPWMK). Positions 180 to 239 (PKRSRTAYTRQQVLELEKEFHFNRYLTRRRRIEIAHTLCLSERQVKIWFQNRRMKWKKDH) form a DNA-binding region, homeobox. The disordered stretch occupies residues 238–285 (DHKLPNTKMRSSNTASAPAGPPGKAQTHSPHHHPHPLPGASTPIPSSI).

It belongs to the Antp homeobox family. Deformed subfamily.

The protein localises to the nucleus. Its function is as follows. Sequence-specific transcription factor which is part of a developmental regulatory system that provides cells with specific positional identities on the anterior-posterior axis. Binds to sites in the 5'-flanking sequence of its coding region with various affinities. The consensus sequences of the high and low affinity binding sites are 5'-TAATGA[CG]-3' and 5'-CTAATTTT-3'. The chain is Homeobox protein Hox-A4 (Hoxa4) from Mus musculus (Mouse).